Reading from the N-terminus, the 389-residue chain is Tryptophan synthase beta chain (389 aa).

An N6-(pyridoxal phosphate)lysine modification is found at Lys84.

Belongs to the TrpB family. Tetramer of two alpha and two beta chains. Pyridoxal 5'-phosphate is required as a cofactor.

The catalysed reaction is (1S,2R)-1-C-(indol-3-yl)glycerol 3-phosphate + L-serine = D-glyceraldehyde 3-phosphate + L-tryptophan + H2O. It participates in amino-acid biosynthesis; L-tryptophan biosynthesis; L-tryptophan from chorismate: step 5/5. Functionally, the beta subunit is responsible for the synthesis of L-tryptophan from indole and L-serine. This is Tryptophan synthase beta chain from Clostridium novyi (strain NT).